Here is a 485-residue protein sequence, read N- to C-terminus: Probable protein phosphatase 2C 3 (485 aa).

Low complexity predominate over residues M1–A11. Disordered stretches follow at residues M1–G29 and A43–G72. A compositionally biased stretch (basic residues) spans A13–H23. A PPM-type phosphatase domain is found at S107–M353. Residues D129, G130, D305, and D344 each coordinate Mn(2+).

This sequence belongs to the PP2C family. Requires Mg(2+) as cofactor. Mn(2+) is required as a cofactor.

The catalysed reaction is O-phospho-L-seryl-[protein] + H2O = L-seryl-[protein] + phosphate. It carries out the reaction O-phospho-L-threonyl-[protein] + H2O = L-threonyl-[protein] + phosphate. In Oryza sativa subsp. japonica (Rice), this protein is Probable protein phosphatase 2C 3.